Consider the following 173-residue polypeptide: Protein C2 (173 aa).

The segment at 69–85 (CNCHFTIHHECNRGFSH) is a zinc-finger region.

The protein belongs to the geminiviridae transcriptional activator protein family. Monomer. Interacting with and inactivating host adenosine kinase 2 (ADK2) in the cytoplasm. Interacts with and inhibits host SNF1 kinase.

It localises to the host cytoplasm. Its function is as follows. Acts as a suppressor of RNA-mediated gene silencing, also known as post-transcriptional gene silencing (PTGS), a mechanism of plant viral defense that limits the accumulation of viral RNAs. Suppresses the host RNA silencing by inhibiting adenosine kinase 2 (ADK2), a kinase involved in a general methylation pathway. Also suppresses the host basal defense by interacting with and inhibiting SNF1 kinase, a key regulator of cell metabolism implicated in innate antiviral defense. Determines pathogenicity. The protein is Protein C2 of Beet curly top virus (strain California/Logan) (BCTV).